Consider the following 289-residue polypeptide: Acetyl-coenzyme A carboxylase carboxyl transferase subunit beta (289 aa).

One can recognise a CoA carboxyltransferase N-terminal domain in the interval 36 to 289 (MWLRCPHCHQ…LLKTGSVANE (254 aa)). The Zn(2+) site is built by C40, C43, C58, and C61. A C4-type zinc finger spans residues 40–61 (CPHCHQLLFAKQLTQYAVCPNC).

It belongs to the AccD/PCCB family. As to quaternary structure, acetyl-CoA carboxylase is a heterohexamer composed of biotin carboxyl carrier protein (AccB), biotin carboxylase (AccC) and two subunits each of ACCase subunit alpha (AccA) and ACCase subunit beta (AccD). Zn(2+) is required as a cofactor.

It is found in the cytoplasm. The catalysed reaction is N(6)-carboxybiotinyl-L-lysyl-[protein] + acetyl-CoA = N(6)-biotinyl-L-lysyl-[protein] + malonyl-CoA. The protein operates within lipid metabolism; malonyl-CoA biosynthesis; malonyl-CoA from acetyl-CoA: step 1/1. Functionally, component of the acetyl coenzyme A carboxylase (ACC) complex. Biotin carboxylase (BC) catalyzes the carboxylation of biotin on its carrier protein (BCCP) and then the CO(2) group is transferred by the transcarboxylase to acetyl-CoA to form malonyl-CoA. This Limosilactobacillus reuteri subsp. reuteri (strain JCM 1112) (Lactobacillus reuteri) protein is Acetyl-coenzyme A carboxylase carboxyl transferase subunit beta.